The chain runs to 437 residues: Adenylosuccinate synthetase (437 aa).

Residues 12-18 (GDEGKGK) and 40-42 (GHT) each bind GTP. Asp13 (proton acceptor) is an active-site residue. Asp13 and Gly40 together coordinate Mg(2+). Residues 13-16 (DEGK), 38-41 (NAGH), Thr128, Arg142, Gln223, Thr238, and Arg302 contribute to the IMP site. Catalysis depends on His41, which acts as the Proton donor. 298–304 (TTTGRRR) contributes to the substrate binding site. GTP contacts are provided by residues Arg304, 330–332 (KLD), and 412–414 (SLG).

This sequence belongs to the adenylosuccinate synthetase family. In terms of assembly, homodimer. It depends on Mg(2+) as a cofactor.

It localises to the cytoplasm. It carries out the reaction IMP + L-aspartate + GTP = N(6)-(1,2-dicarboxyethyl)-AMP + GDP + phosphate + 2 H(+). It participates in purine metabolism; AMP biosynthesis via de novo pathway; AMP from IMP: step 1/2. Plays an important role in the de novo pathway of purine nucleotide biosynthesis. Catalyzes the first committed step in the biosynthesis of AMP from IMP. The protein is Adenylosuccinate synthetase of Prochlorococcus marinus (strain MIT 9211).